We begin with the raw amino-acid sequence, 502 residues long: uncharacterized protein (502 aa).

Residues 1-21 (MKIFLVFLSVFFFNGCFGLVY) traverse the membrane as a helical segment. PLD phosphodiesterase domains follow at residues 162–189 (IKKR…GDNY) and 396–423 (TKHS…DPRS).

Belongs to the phospholipase D family. Cardiolipin synthase subfamily.

It localises to the cell membrane. This is an uncharacterized protein from Helicobacter pylori (strain ATCC 700392 / 26695) (Campylobacter pylori).